Here is a 326-residue protein sequence, read N- to C-terminus: Cathepsin L-like proteinase (326 aa).

Residues 1-15 form the signal peptide; the sequence is MRLFILAVLTVGVLG. Residues 16-106 constitute a propeptide, activation peptide; the sequence is SNDDLWHQWK…HGVPYEANNR (91 aa). Pro-109 carries the post-translational modification 3-hydroxyproline; partial. 3 disulfides stabilise this stretch: Cys-129/Cys-172, Cys-163/Cys-204, and Cys-262/Cys-311. Cys-132 is an active-site residue. Pro-196 carries the post-translational modification 3-hydroxyproline; partial. Residues His-269 and Asn-289 contribute to the active site.

The protein belongs to the peptidase C1 family. As to quaternary structure, monomer. Contains cysteine residues involved in intramolecular disulfide bonding.

Its subcellular location is the secreted. Strongly inhibited by Antipain, E64 and Leupeptin, and weakly inhibited by iodoacetic acid (IAA) and phenylmethylsulfonyl fluoride (PMSF). Requires the presence of dithiothreitol (DTT) for activity. Functionally, thiol protease. Probably involved in interaction with host tissues. Displays a similar activity to that of papain. Has high activity on Z-Phe-Arg-NHMec, but no activity on Z-Arg-NHMec. This Fasciola hepatica (Liver fluke) protein is Cathepsin L-like proteinase.